The chain runs to 240 residues: T4 protein (240 aa).

It belongs to the poxviruses B9 family.

The sequence is that of T4 protein from Sheeppox virus (strain InS-1) (SPPV).